Reading from the N-terminus, the 390-residue chain is Lipid-A-disaccharide synthase (390 aa).

Belongs to the LpxB family.

The enzyme catalyses a lipid X + a UDP-2-N,3-O-bis[(3R)-3-hydroxyacyl]-alpha-D-glucosamine = a lipid A disaccharide + UDP + H(+). Its pathway is bacterial outer membrane biogenesis; LPS lipid A biosynthesis. Its function is as follows. Condensation of UDP-2,3-diacylglucosamine and 2,3-diacylglucosamine-1-phosphate to form lipid A disaccharide, a precursor of lipid A, a phosphorylated glycolipid that anchors the lipopolysaccharide to the outer membrane of the cell. The chain is Lipid-A-disaccharide synthase from Paramagnetospirillum magneticum (strain ATCC 700264 / AMB-1) (Magnetospirillum magneticum).